The following is a 232-amino-acid chain: Sensory rhodopsin III (232 aa).

Transmembrane regions (helical) follow at residues 5 to 25, 39 to 59, 73 to 93, 100 to 120, 125 to 145, 168 to 188, and 194 to 214; these read IVWY…FVWF, LPPI…LIAG, FADW…LAGV, LAVA…SMSG, IAFA…IKTF, VVTW…TGII, and NFLV…ILLV. K205 carries the post-translational modification N6-(retinylidene)lysine.

This sequence belongs to the archaeal/bacterial/fungal opsin family. In terms of assembly, interacts with HtrM. Post-translationally, the covalent binding of retinal to the apoprotein, bacterioopsin, generates bacteriorhodopsin.

It localises to the membrane. In terms of biological role, sensory rhodopsin. Associates with an unusual transducer lacking a methyl-accepting transducer domain found in all other photosensory transducers. The chromophore is all-trans-retinal in the dark. The protein is Sensory rhodopsin III (xop2) of Haloarcula marismortui (strain ATCC 43049 / DSM 3752 / JCM 8966 / VKM B-1809) (Halobacterium marismortui).